The primary structure comprises 268 residues: Orotidine 5'-phosphate decarboxylase (268 aa).

Residues Asp37, 59–61, 91–100, Tyr217, and Arg235 each bind substrate; these read KTH and DRKFADIGNT. The Proton donor role is filled by Lys93.

This sequence belongs to the OMP decarboxylase family.

The enzyme catalyses orotidine 5'-phosphate + H(+) = UMP + CO2. It functions in the pathway pyrimidine metabolism; UMP biosynthesis via de novo pathway; UMP from orotate: step 2/2. The sequence is that of Orotidine 5'-phosphate decarboxylase (URA4) from Maudiozyma exigua (Yeast).